Here is a 646-residue protein sequence, read N- to C-terminus: Wee1-like protein kinase (646 aa).

Positions 1 to 181 (MSFLSRQQPP…GTPPHKTFRK (181 aa)) are disordered. Residues 32 to 43 (DCEEEEEEEEEE) show a composition bias toward acidic residues. Ser53 carries the post-translational modification Phosphoserine; by PLK1. Phosphoserine is present on residues Ser78 and Ser85. Residues 94 to 103 (LLPGACPGAD) show a composition bias toward low complexity. At Ser123 the chain carries Phosphoserine; by CDK1. Phosphoserine occurs at positions 127, 137, 139, 150, and 165. Residues 158-170 (RAGEGRRSPRPDH) show a composition bias toward basic and acidic residues. Phosphothreonine occurs at positions 187, 190, and 239. Ser270, Ser307, and Ser312 each carry phosphoserine. Residues 299–569 (FHELEKIGSG…AMALVKHSVL (271 aa)) form the Protein kinase domain. ATP contacts are provided by residues 305 to 313 (IGSGEFGSV) and Lys328. Asn342 is a Mg(2+) binding site. Asp426 functions as the Proton acceptor in the catalytic mechanism. Asn431, Asp463, and Gly465 together coordinate Mg(2+). Position 642 is a phosphoserine; by BRSK1 and BRSK2 (Ser642).

It belongs to the protein kinase superfamily. Ser/Thr protein kinase family. WEE1 subfamily. The cofactor is Mg(2+). In terms of processing, phosphorylated during M and G1 phases. Also autophosphorylated. Phosphorylation at Ser-642 by BRSK1 and BRSK2 in post-mitotic neurons, leads to down-regulate WEE1 activity in polarized neurons. Phosphorylated at Ser-53 and Ser-123 by PLK1 and CDK1, respectively, generating an signal for degradation that can be recognized by the SCF(BTRC) complex, leading to its ubiquitination and degradation at the onset of G2/M phase. Post-translationally, dephosphorylated at Thr-239 by CTDP1. Dephosphorylated at Ser-53 and Ser-123 by the serine/threonine-protein phosphatase 2A preventing its ubiquitin-mediated degradation. Ubiquitinated and degraded at the onset of G2/M phase.

Its subcellular location is the nucleus. The enzyme catalyses L-tyrosyl-[protein] + ATP = O-phospho-L-tyrosyl-[protein] + ADP + H(+). Synthesis is increased during S and G2 phases, presumably by an increase in transcription; activity is decreased by phosphorylation during M phase. Protein levels fall in M phase as a result of decreased synthesis combined with degradation. Activity seems to be negatively regulated by phosphorylation upon entry into mitosis, although N-terminal phosphorylation might also regulate the protein stability via protection from proteolysis or might regulate the subcellular location. Functionally, acts as a negative regulator of entry into mitosis (G2 to M transition) by protecting the nucleus from cytoplasmically activated cyclin B1-complexed CDK1 before the onset of mitosis by mediating phosphorylation of CDK1 on 'Tyr-15'. Specifically phosphorylates and inactivates cyclin B1-complexed CDK1 reaching a maximum during G2 phase and a minimum as cells enter M phase. Phosphorylation of cyclin B1-CDK1 occurs exclusively on 'Tyr-15' and phosphorylation of monomeric CDK1 does not occur. Its activity increases during S and G2 phases and decreases at M phase when it is hyperphosphorylated. A correlated decrease in protein level occurs at M/G1 phase, probably due to its degradation. This chain is Wee1-like protein kinase, found in Homo sapiens (Human).